A 318-amino-acid polypeptide reads, in one-letter code: Phosphatidylglycerol--prolipoprotein diacylglyceryl transferase (318 aa).

Transmembrane regions (helical) follow at residues 23 to 43 (PLTIRFYALCILAGIVIGAWL), 59 to 79 (MDIIMWAVPFGIVGGRLYHVI), 98 to 118 (IWEGGLGIWGAVAVGLAGAAI), 124 to 146 (GVRLATFADAAAPGLLLAQAMGR), 192 to 212 (FQPTFLYESLWCLAAAALLVF), 219 to 239 (LGAGSVFALYVVLYTAGRFIF), and 253 to 273 (LRVNTWVSALLFLAALAVFLI). Arginine 146 is an a 1,2-diacyl-sn-glycero-3-phospho-(1'-sn-glycerol) binding site. Residues 293-312 (FDTRANGHDPEKHDETDGKG) show a composition bias toward basic and acidic residues. The segment at 293-318 (FDTRANGHDPEKHDETDGKGNRHHVP) is disordered.

This sequence belongs to the Lgt family.

The protein resides in the cell membrane. It carries out the reaction L-cysteinyl-[prolipoprotein] + a 1,2-diacyl-sn-glycero-3-phospho-(1'-sn-glycerol) = an S-1,2-diacyl-sn-glyceryl-L-cysteinyl-[prolipoprotein] + sn-glycerol 1-phosphate + H(+). It participates in protein modification; lipoprotein biosynthesis (diacylglyceryl transfer). Its function is as follows. Catalyzes the transfer of the diacylglyceryl group from phosphatidylglycerol to the sulfhydryl group of the N-terminal cysteine of a prolipoprotein, the first step in the formation of mature lipoproteins. This chain is Phosphatidylglycerol--prolipoprotein diacylglyceryl transferase, found in Paenarthrobacter aurescens (strain TC1).